Reading from the N-terminus, the 355-residue chain is Probable nitronate monooxygenase (355 aa).

FMN is bound by residues Asn71, Gln175, Gly180, Gly218, and 237–240 (QMGT).

It belongs to the nitronate monooxygenase family. NMO class I subfamily. It depends on FMN as a cofactor.

It catalyses the reaction 3 propionate 3-nitronate + 3 O2 + H2O = 3 3-oxopropanoate + 2 nitrate + nitrite + H2O2 + 3 H(+). Its function is as follows. Nitronate monooxygenase that uses molecular oxygen to catalyze the oxidative denitrification of alkyl nitronates. Acts on propionate 3-nitronate (P3N), the presumed physiological substrate. Probably functions in the detoxification of P3N, a metabolic poison produced by plants and fungi as a defense mechanism. The protein is Probable nitronate monooxygenase of Staphylococcus aureus (strain MSSA476).